A 350-amino-acid polypeptide reads, in one-letter code: Cell division protein ZipA (350 aa).

The Periplasmic segment spans residues 1 to 6; sequence MEDLQL. The chain crosses the membrane as a helical span at residues 7 to 27; it reads VLFVLGAIAIVAVLVHGFWSI. Topologically, residues 28-350 are cytoplasmic; sequence RKQQPRTIKE…QYLARIRANA (323 aa). Disordered regions lie at residues 36-55, 65-136, and 187-213; these read KEQP…AEGF, VRKL…PSAR, and RVPA…EEPL. Composition is skewed to basic and acidic residues over residues 65-109 and 116-131; these read VRKL…ESRA and AAHE…HEEP.

This sequence belongs to the ZipA family. Interacts with FtsZ via their C-terminal domains.

It is found in the cell inner membrane. Essential cell division protein that stabilizes the FtsZ protofilaments by cross-linking them and that serves as a cytoplasmic membrane anchor for the Z ring. Also required for the recruitment to the septal ring of downstream cell division proteins. This Shewanella amazonensis (strain ATCC BAA-1098 / SB2B) protein is Cell division protein ZipA.